A 414-amino-acid chain; its full sequence is Esterase FrsA (414 aa).

This sequence belongs to the FrsA family.

The enzyme catalyses a carboxylic ester + H2O = an alcohol + a carboxylate + H(+). Catalyzes the hydrolysis of esters. The chain is Esterase FrsA from Escherichia coli (strain K12 / DH10B).